The chain runs to 80 residues: Bowman-Birk type proteinase inhibitor DE-4 (80 aa).

Acidic residues predominate over residues 1 to 10; it reads DDDHSDDEPR. Residues 1 to 29 form a disordered region; sequence DDDHSDDEPRESESSKPCCSSCCTRSRPP. A compositionally biased stretch (low complexity) spans 15–29; that stretch reads SKPCCSSCCTRSRPP. Cystine bridges form between Cys18–Cys71, Cys19–Cys33, Cys22–Cys67, Cys23–Cys31, Cys41–Cys48, Cys45–Cys60, and Cys50–Cys58.

The protein belongs to the Bowman-Birk serine protease inhibitor family.

The polypeptide is Bowman-Birk type proteinase inhibitor DE-4 (Philenoptera violacea (Apple-leaf)).